Reading from the N-terminus, the 1756-residue chain is Transposon Ty1-PR2 Gag-Pol polyprotein (1756 aa).

3 stretches are compositionally biased toward polar residues: residues 1–10 (MESQQLSNYP), 48–60 (TKAN…TPAS), and 127–152 (QSQF…GNTF). 3 disordered regions span residues 1–93 (MESQ…MMTQ), 126–173 (PQSQ…RPPP), and 352–421 (GSRN…SKST). Residues 153-165 (TDSSSADSDMTST) show a composition bias toward low complexity. Residues 299-401 (NNGIHINNKV…NSKSKTARAH (103 aa)) are RNA-binding. Positions 402–418 (NVSTSNNSPSTDNDSIS) are enriched in low complexity. The For protease activity; shared with dimeric partner role is filled by D461. An integrase-type zinc finger-like region spans residues 583–640 (NVHTSESTRKYPYPFIHRMLAHANAQTIRYSLKNNTITYFNESDVDWSSAIDYQCPDC). The Integrase catalytic domain occupies 660 to 836 (NSYEPFQYLH…AGLDISTLLP (177 aa)). Mg(2+) is bound by residues D671 and D736. Disordered stretches follow at residues 957–1088 (SKAV…ETEK), 1093–1112 (RSPS…NIVP), and 1131–1188 (DLPL…DNET). Low complexity predominate over residues 961–970 (SPTDSTPPST). Residues 1006 to 1016 (STPQISNIEST) show a composition bias toward polar residues. The span at 1039-1054 (ESSHASKSKDFRHSDS) shows a compositional bias: basic and acidic residues. Polar residues-rich tracts occupy residues 1055-1083 (YSEN…QISD) and 1102-1112 (PENNSSHNIVP). Residues 1179-1213 (KKRSLEDNETEIKVSRDTWNTKNMRSLEPPRSKKR) carry the Bipartite nuclear localization signal motif. One can recognise a Reverse transcriptase Ty1/copia-type domain in the interval 1339–1477 (NNYYITQLDI…DILGLEIKYQ (139 aa)). Residues D1347, D1428, D1429, D1611, E1653, and D1686 each coordinate Mg(2+). One can recognise an RNase H Ty1/copia-type domain in the interval 1611 to 1753 (DASYGNQPYY…IKTFKLLTNK (143 aa)).

In terms of assembly, the capsid protein forms a homotrimer, from which the VLPs are assembled. The protease is a homodimer, whose active site consists of two apposed aspartic acid residues. In terms of processing, initially, virus-like particles (VLPs) are composed of the structural unprocessed proteins Gag and Gag-Pol, and also contain the host initiator methionine tRNA (tRNA(i)-Met) which serves as a primer for minus-strand DNA synthesis, and a dimer of genomic Ty RNA. Processing of the polyproteins occurs within the particle and proceeds by an ordered pathway, called maturation. First, the protease (PR) is released by autocatalytic cleavage of the Gag-Pol polyprotein yielding capsid protein p45 and a Pol-p154 precursor protein. This cleavage is a prerequisite for subsequent processing of Pol-p154 at the remaining sites to release the mature structural and catalytic proteins. Maturation takes place prior to the RT reaction and is required to produce transposition-competent VLPs.

It is found in the cytoplasm. Its subcellular location is the nucleus. It carries out the reaction DNA(n) + a 2'-deoxyribonucleoside 5'-triphosphate = DNA(n+1) + diphosphate. It catalyses the reaction Endonucleolytic cleavage to 5'-phosphomonoester.. Its function is as follows. Capsid protein (CA) is the structural component of the virus-like particle (VLP), forming the shell that encapsulates the retrotransposons dimeric RNA genome. The particles are assembled from trimer-clustered units and there are holes in the capsid shells that allow for the diffusion of macromolecules. CA also has nucleocapsid-like chaperone activity, promoting primer tRNA(i)-Met annealing to the multipartite primer-binding site (PBS), dimerization of Ty1 RNA and initiation of reverse transcription. In terms of biological role, the aspartyl protease (PR) mediates the proteolytic cleavages of the Gag and Gag-Pol polyproteins after assembly of the VLP. Functionally, reverse transcriptase/ribonuclease H (RT) is a multifunctional enzyme that catalyzes the conversion of the retro-elements RNA genome into dsDNA within the VLP. The enzyme displays a DNA polymerase activity that can copy either DNA or RNA templates, and a ribonuclease H (RNase H) activity that cleaves the RNA strand of RNA-DNA heteroduplexes during plus-strand synthesis and hydrolyzes RNA primers. The conversion leads to a linear dsDNA copy of the retrotransposon that includes long terminal repeats (LTRs) at both ends. Integrase (IN) targets the VLP to the nucleus, where a subparticle preintegration complex (PIC) containing at least integrase and the newly synthesized dsDNA copy of the retrotransposon must transit the nuclear membrane. Once in the nucleus, integrase performs the integration of the dsDNA into the host genome. In Saccharomyces cerevisiae (strain ATCC 204508 / S288c) (Baker's yeast), this protein is Transposon Ty1-PR2 Gag-Pol polyprotein (TY1B-PR2).